We begin with the raw amino-acid sequence, 78 residues long: Acyl carrier protein (78 aa).

The Carrier domain maps to 2–77; the sequence is SNFEERVKKI…AAIDYVVSSA (76 aa). At Ser-37 the chain carries O-(pantetheine 4'-phosphoryl)serine.

The protein belongs to the acyl carrier protein (ACP) family. In terms of processing, 4'-phosphopantetheine is transferred from CoA to a specific serine of apo-ACP by AcpS. This modification is essential for activity because fatty acids are bound in thioester linkage to the sulfhydryl of the prosthetic group.

It localises to the cytoplasm. The protein operates within lipid metabolism; fatty acid biosynthesis. In terms of biological role, carrier of the growing fatty acid chain in fatty acid biosynthesis. Is probably involved in the biosynthesis of docosahexaenoic acid (DHA) which is produced by this bacterium as a fatty acyl component in its membrane lipid. The protein is Acyl carrier protein of Moritella marina (Vibrio marinus).